We begin with the raw amino-acid sequence, 246 residues long: Proteolipid protein DM gamma (246 aa).

The next 4 membrane-spanning stretches (helical) occupy residues 19 to 35, 71 to 87, 118 to 134, and 206 to 222; these read LLAT…FCGC, VIYG…IILL, VFLT…VFGF, and FIVA…ALLI.

The protein belongs to the myelin proteolipid protein family. As to expression, highly expressed in white matter in myelinating shark brain.

It is found in the membrane. The polypeptide is Proteolipid protein DM gamma (Squalus acanthias (Spiny dogfish)).